The following is a 326-amino-acid chain: MSNGYEDHMAEDCRDDIGRTNLIVNYLPQNMTQEELRSLFSSIGEVESAKLIRDKVAGHSLGYGFVNYVTAKDAERAISTLNGLRLQSKTIKVSYARPSSEVIKDANLYISGLPRTMTQKDVEDMFSRFGRIINSRVLVDQTTGLSRGVAFIRFDKRSEAEEAITSFNGHKPPGSSEPITVKFAANPNQNKNMALLSQLYHSPARRFGGPVHHQAQRFRFSPMGVDHMSGISGVNVPGNASSGWCIFIYNLGQDADEGILWQMFGPFGAVTNVKVIRDFNTNKCKGFGFVTMTNYEEAAMAIASLNGYRLGDKILQVSFKTNKSHK.

An N-acetylserine modification is found at Ser2. Position 2 is a phosphoserine (Ser2). Residues 20 to 98 enclose the RRM 1 domain; it reads TNLIVNYLPQ…KTIKVSYARP (79 aa). Phosphoserine occurs at positions 100 and 158. The region spanning 106-186 is the RRM 2 domain; the sequence is ANLYISGLPR…EPITVKFAAN (81 aa). Lys191 participates in a covalent cross-link: Glycyl lysine isopeptide (Lys-Gly) (interchain with G-Cter in SUMO2). 2 positions are modified to phosphoserine: Ser197 and Ser202. Arg206 carries the post-translational modification Omega-N-methylarginine. At Arg217 the chain carries Asymmetric dimethylarginine; by CARM1; alternate. Arg217 bears the Omega-N-methylarginine; alternate mark. Ser221 and Ser318 each carry phosphoserine. The region spanning 244–322 is the RRM 3 domain; that stretch reads WCIFIYNLGQ…KILQVSFKTN (79 aa).

The protein belongs to the RRM elav family. As to quaternary structure, monomer and homodimer (in vitro). Interacts with ANP32A. Interacts with ZNF385A; the interaction is indirect and mRNA-dependent and may regulate p53/TP53 expression. Identified in a mRNP complex, at least composed of DHX9, DDX3X, ELAVL1, HNRNPU, IGF2BP1, ILF3, PABPC1, PCBP2, PTBP2, STAU1, STAU2, SYNCRIP and YBX1. Interacts with AGO1 and AGO2. Interacts with IGF2BP1. Interacts with IGF2BP2 and IGF2BP3. Interacts with HNRNPL. Interacts with DHX36; this interaction occurs in a RNA-dependent manner. Interacts with ILF3; this interaction occurs in a RNA-dependent manner. Interacts with PLEKHN1. Interacts with SHFL; the interaction increases in presence of RNA. Interacts with YBX1; interaction recruits ELAVL1 on C5-methylcytosine (m5C)-containing mRNAs, thereby promoting mRNA stability. Interacts with FXR1. In terms of processing, phosphorylated by MAPKAPK2. Phosphorylated by PRKCD. Methylated at Arg-217 by CARM1 in T-cells in response to LPS challenge.

It is found in the cytoplasm. The protein localises to the nucleus. Its subcellular location is the stress granule. It localises to the P-body. RNA-binding protein that binds to the 3'-UTR region of mRNAs and increases their stability. Involved in embryonic stem cell (ESC) differentiation: preferentially binds mRNAs that are not methylated by N6-methyladenosine (m6A), stabilizing them, promoting ESC differentiation. Has also been shown to be capable of binding to m6A-containing mRNAs and contributes to MYC stability by binding to m6A-containing MYC mRNAs. Binds to poly-U elements and AU-rich elements (AREs) in the 3'-UTR of target mRNAs. Binds avidly to the AU-rich element in FOS and IL3/interleukin-3 mRNAs. In the case of the FOS AU-rich element, binds to a core element of 27 nucleotides that contain AUUUA, AUUUUA, and AUUUUUA motifs. Binds preferentially to the 5'-UUUU[AG]UUU-3' motif in vitro. With ZNF385A, binds the 3'-UTR of p53/TP53 mRNA to control their nuclear export induced by CDKN2A. Hence, may regulate p53/TP53 expression and mediate in part the CDKN2A anti-proliferative activity. May also bind with ZNF385A the CCNB1 mRNA. Increases the stability of the leptin mRNA harboring an AU-rich element (ARE) in its 3' UTR. This chain is ELAV-like protein 1 (Elavl1), found in Mus musculus (Mouse).